A 226-amino-acid chain; its full sequence is 7-cyano-7-deazaguanine synthase (226 aa).

Residue 10 to 20 (LSGGLDSATAA) participates in ATP binding. Zn(2+) contacts are provided by cysteine 191, cysteine 199, cysteine 202, and cysteine 205.

Belongs to the QueC family. Zn(2+) serves as cofactor.

The enzyme catalyses 7-carboxy-7-deazaguanine + NH4(+) + ATP = 7-cyano-7-deazaguanine + ADP + phosphate + H2O + H(+). The protein operates within purine metabolism; 7-cyano-7-deazaguanine biosynthesis. In terms of biological role, catalyzes the ATP-dependent conversion of 7-carboxy-7-deazaguanine (CDG) to 7-cyano-7-deazaguanine (preQ(0)). The polypeptide is 7-cyano-7-deazaguanine synthase (Synechococcus sp. (strain CC9311)).